Here is a 116-residue protein sequence, read N- to C-terminus: Large ribosomal subunit protein bL20 (116 aa).

The protein belongs to the bacterial ribosomal protein bL20 family.

In terms of biological role, binds directly to 23S ribosomal RNA and is necessary for the in vitro assembly process of the 50S ribosomal subunit. It is not involved in the protein synthesizing functions of that subunit. In Desulfosudis oleivorans (strain DSM 6200 / JCM 39069 / Hxd3) (Desulfococcus oleovorans), this protein is Large ribosomal subunit protein bL20.